The following is a 793-amino-acid chain: Protein PAT1 homolog (793 aa).

Phosphoserine is present on residues S200 and S208. Disordered stretches follow at residues 203-256 (PPGS…TGNR) and 292-312 (MLQQ…GSQN). A compositionally biased stretch (polar residues) spans 219–242 (PYQSGGPQMGSPNFSPFPNLQPQL). Phosphoserine occurs at positions 342 and 343. The segment at 476-501 (RPLLEVDPPNSAKFGNAEHKPTDKPL) is disordered. Over residues 491–501 (NAEHKPTDKPL) the composition is skewed to basic and acidic residues.

In terms of assembly, interacts with MPK4 and SUMM2. Phosphorylated at Ser-208 by MPK4 upon flg22 elicitation. Phosphorylated at Ser-200, Ser-342 and Ser-343 upon flg22 elicitation.

The protein resides in the cytoplasm. It is found in the P-body. Functionally, activator of mRNA decapping. Involved in mRNA decay via decapping. Involved in disease resistance in response to biotrophic and necrotrophic pathogens. Is part of a signaling pathway including MPK4 and the disease resistance protein SUMM2. This Arabidopsis thaliana (Mouse-ear cress) protein is Protein PAT1 homolog.